A 534-amino-acid polypeptide reads, in one-letter code: DNA-directed RNA polymerase III subunit RPC3 (534 aa).

A disordered region spans residues 161–181 (PSVPTTENSDPGPPPPAPTLV). At Ser-194 the chain carries Phosphoserine. Residues 197 to 228 (GKGKRRRSSDEDAAGEPKAKRPKYTTDNKEPI) form a disordered region. The segment covering 211–228 (GEPKAKRPKYTTDNKEPI) has biased composition (basic and acidic residues).

Belongs to the eukaryotic RPC3/POLR3C RNA polymerase subunit family. Component of the RNA polymerase III complex consisting of 17 subunits: a ten-subunit horseshoe-shaped catalytic core composed of POLR3A/RPC1, POLR3B/RPC2, POLR1C/RPAC1, POLR1D/RPAC2, POLR3K/RPC10, POLR2E/RPABC1, POLR2F/RPABC2, POLR2H/RPABC3, POLR2K/RPABC4 and POLR2L/RPABC5; a mobile stalk composed of two subunits POLR3H/RPC8 and CRCP/RPC9, protruding from the core and functioning primarily in transcription initiation; and additional subunits homologous to general transcription factors of the RNA polymerase II machinery, POLR3C/RPC3-POLR3F/RPC6-POLR3G/RPC7 heterotrimer required for transcription initiation and POLR3D/RPC4-POLR3E/RPC5 heterodimer involved in both transcription initiation and termination. Directly interacts with POLR3G/RPC7 and POLR3GL. Directly interacts with POLR3F/RPC6. Interacts with GTF3C4. As part of the RNA polymerase III complex, interacts with PKP2.

It is found in the nucleus. Functionally, DNA-dependent RNA polymerase catalyzes the transcription of DNA into RNA using the four ribonucleoside triphosphates as substrates. Specific peripheric component of RNA polymerase III (Pol III) which synthesizes small non-coding RNAs including 5S rRNA, snRNAs, tRNAs and miRNAs from at least 500 distinct genomic loci. Part of POLR3C/RPC3-POLR3F/RPC6-POLR3G/RPC7 heterotrimer, coordinates the dynamics of Pol III stalk and clamp modules during the transition from apo to elongation state. Pol III plays a key role in sensing and limiting infection by intracellular bacteria and DNA viruses. Acts as a nuclear and cytosolic DNA sensor involved in innate immune response. Can sense non-self dsDNA that serves as template for transcription into dsRNA. The non-self RNA polymerase III transcripts, such as Epstein-Barr virus-encoded RNAs (EBERs) induce type I interferon and NF-kappa-B through the RIG-I pathway. Preferentially binds single-stranded DNA (ssDNA) in a sequence-independent manner. In Homo sapiens (Human), this protein is DNA-directed RNA polymerase III subunit RPC3.